A 356-amino-acid chain; its full sequence is Neutral protease 2 homolog UREG_03761 (356 aa).

An N-terminal signal peptide occupies residues 1–19 (MRFSSSFLSVLALASQALA). A propeptide spanning residues 20–181 (FPLNDLPTTD…ALPEATLDKR (162 aa)) is cleaved from the precursor. Intrachain disulfides connect Cys-189–Cys-259 and Cys-266–Cys-284. His-308 serves as a coordination point for Zn(2+). Glu-309 is an active-site residue. Zn(2+) contacts are provided by His-312 and Asp-323.

The protein belongs to the peptidase M35 family. It depends on Zn(2+) as a cofactor.

It localises to the secreted. It catalyses the reaction Preferential cleavage of bonds with hydrophobic residues in P1'. Also 3-Asn-|-Gln-4 and 8-Gly-|-Ser-9 bonds in insulin B chain.. In terms of biological role, secreted metalloproteinase that allows assimilation of proteinaceous substrates. Shows high activities on basic nuclear substrates such as histone and protamine. In Uncinocarpus reesii (strain UAMH 1704), this protein is Neutral protease 2 homolog UREG_03761.